Reading from the N-terminus, the 323-residue chain is MKPFSLLRRIATIALLMAASSAHADTFPSRPIRLIVPFGPGGITDLIARQAALGMAEKLGQPVIIENKPSAGHIVAMQTVAQATPDGYTILLGSNTGFTVAPHMYKNLPFRIDTLQPIAPINTAPTVLLARPDFPANNLTELIQYIKDNPGKLNYGSFGIGTSAHLGMEIMKSDLGLNIMHIPYRGDAQGLLALKAKEVDIAYITLFSAQARIRAGEFKALGVLQNDRLTAFPDIQTTVEVGSKNSGMPVWIAFFAPPGTPDAVMRKLESATRSASTAPAFVEFLHNNGVEPWNPSNQDLMRFIQDQLNRSGPIIQEIGLQPQ.

The N-terminal stretch at 1 to 24 (MKPFSLLRRIATIALLMAASSAHA) is a signal peptide.

It belongs to the UPF0065 (bug) family.

The protein localises to the periplasm. The chain is UPF0065 protein BP0148 from Bordetella pertussis (strain Tohama I / ATCC BAA-589 / NCTC 13251).